A 448-amino-acid chain; its full sequence is Beta-glucosidase B (448 aa).

Catalysis depends on glutamate 167, which acts as the Proton donor. Catalysis depends on glutamate 356, which acts as the Nucleophile.

This sequence belongs to the glycosyl hydrolase 1 family.

The enzyme catalyses Hydrolysis of terminal, non-reducing beta-D-glucosyl residues with release of beta-D-glucose.. The sequence is that of Beta-glucosidase B (bglB) from Paenibacillus polymyxa (Bacillus polymyxa).